The primary structure comprises 185 residues: Sulfopyruvate decarboxylase subunit beta (185 aa).

Belongs to the TPP enzyme family. As to quaternary structure, heterododecamer composed of 6 subunits alpha and 6 subunits beta. Requires thiamine diphosphate as cofactor.

It carries out the reaction 3-sulfopyruvate + H(+) = sulfoacetaldehyde + CO2. It participates in cofactor biosynthesis; coenzyme M biosynthesis; sulfoacetaldehyde from phosphoenolpyruvate and sulfite: step 4/4. Functionally, involved in the biosynthesis of the coenzyme M (2-mercaptoethanesulfonic acid). Catalyzes the decarboxylation of sulfopyruvate to sulfoacetaldehyde. The sequence is that of Sulfopyruvate decarboxylase subunit beta from Methanococcus maripaludis (strain DSM 14266 / JCM 13030 / NBRC 101832 / S2 / LL).